We begin with the raw amino-acid sequence, 542 residues long: Chaperonin GroEL (542 aa).

ATP contacts are provided by residues 29-32 (TLGP), 86-90 (DGTTT), G413, 476-478 (NAA), and D492.

It belongs to the chaperonin (HSP60) family. In terms of assembly, forms a cylinder of 14 subunits composed of two heptameric rings stacked back-to-back. Interacts with the co-chaperonin GroES.

It localises to the cytoplasm. It carries out the reaction ATP + H2O + a folded polypeptide = ADP + phosphate + an unfolded polypeptide.. In terms of biological role, together with its co-chaperonin GroES, plays an essential role in assisting protein folding. The GroEL-GroES system forms a nano-cage that allows encapsulation of the non-native substrate proteins and provides a physical environment optimized to promote and accelerate protein folding. The chain is Chaperonin GroEL from Streptococcus mutans serotype c (strain ATCC 700610 / UA159).